Reading from the N-terminus, the 32-residue chain is Snake venom serine proteinase (32 aa).

A Peptidase S1 domain is found at valine 1–asparagine 32.

Belongs to the peptidase S1 family. Snake venom subfamily. Monomer. Post-translationally, contains 6 disulfide bonds. Glycosylated. As to expression, expressed by the venom gland.

It localises to the secreted. In terms of biological role, cleaves a kininogen analog with the release of kallidin (lysyl-bradykinin). Completely cleaves fibrinogen Aalpha chain, partially cleaves Bbeta chain and has no activity on gamma chain. The sequence is that of Snake venom serine proteinase from Bitis arietans (African puff adder).